The following is a 292-amino-acid chain: MNDLSCPAIAFPFFLDPVIIRLGPIALHWYGLGYVVGILFAWWYAQKLLKKHSLWNTNHPPMDKEKIGDFVVWSAISVVVGGRLGQVLVWDLAYYFNHPSAIIAVWDGGMSFHGGFIGIIIAMIWFARKNNINIRAMFDIVAAGAPIGIGIVRICNFINQELWGNITTLPWAICFPLDPYYLPRHPSQLYEAFMEGFLLFIILFIIIFAFKALKRPGTVAGTFMIGYAIARSISEVYRAPQEDPEWFSTLFHSTGFTYGMALSLPMLFFGIYLLLQAFKHKSTENGHPKRKN.

The next 6 helical transmembrane spans lie at 25–45 (IALH…WWYA), 70–90 (FVVW…VLVW), 101–121 (AIIA…GIII), 138–158 (FDIV…CNFI), 193–213 (FMEG…FKAL), and 255–275 (GFTY…YLLL). Residue R153 participates in a 1,2-diacyl-sn-glycero-3-phospho-(1'-sn-glycerol) binding.

It belongs to the Lgt family.

The protein localises to the cell inner membrane. The catalysed reaction is L-cysteinyl-[prolipoprotein] + a 1,2-diacyl-sn-glycero-3-phospho-(1'-sn-glycerol) = an S-1,2-diacyl-sn-glyceryl-L-cysteinyl-[prolipoprotein] + sn-glycerol 1-phosphate + H(+). It participates in protein modification; lipoprotein biosynthesis (diacylglyceryl transfer). Functionally, catalyzes the transfer of the diacylglyceryl group from phosphatidylglycerol to the sulfhydryl group of the N-terminal cysteine of a prolipoprotein, the first step in the formation of mature lipoproteins. In Bartonella quintana (strain Toulouse) (Rochalimaea quintana), this protein is Phosphatidylglycerol--prolipoprotein diacylglyceryl transferase.